The chain runs to 462 residues: tRNA-2-methylthio-N(6)-dimethylallyladenosine synthase (462 aa).

Positions 28–144 (KKLFVKTYGC…LPKMMEAVNA (117 aa)) constitute an MTTase N-terminal domain. [4Fe-4S] cluster is bound by residues Cys37, Cys73, Cys107, Cys181, Cys185, and Cys188. Positions 167-398 (ATRGPTAFLT…QALLTQQQRA (232 aa)) constitute a Radical SAM core domain. Residues 401–462 (DAMVGRRVKV…KTNSLTGRLV (62 aa)) form the TRAM domain.

This sequence belongs to the methylthiotransferase family. MiaB subfamily. Monomer. [4Fe-4S] cluster serves as cofactor.

The protein resides in the cytoplasm. The enzyme catalyses N(6)-dimethylallyladenosine(37) in tRNA + (sulfur carrier)-SH + AH2 + 2 S-adenosyl-L-methionine = 2-methylsulfanyl-N(6)-dimethylallyladenosine(37) in tRNA + (sulfur carrier)-H + 5'-deoxyadenosine + L-methionine + A + S-adenosyl-L-homocysteine + 2 H(+). Functionally, catalyzes the methylthiolation of N6-(dimethylallyl)adenosine (i(6)A), leading to the formation of 2-methylthio-N6-(dimethylallyl)adenosine (ms(2)i(6)A) at position 37 in tRNAs that read codons beginning with uridine. The polypeptide is tRNA-2-methylthio-N(6)-dimethylallyladenosine synthase (Jannaschia sp. (strain CCS1)).